Reading from the N-terminus, the 433-residue chain is Histidinol dehydrogenase (433 aa).

Residues tyrosine 130, glutamine 191, and asparagine 214 each coordinate NAD(+). Substrate is bound by residues serine 237, glutamine 259, and histidine 262. Residues glutamine 259 and histidine 262 each coordinate Zn(2+). Active-site proton acceptor residues include glutamate 327 and histidine 328. Substrate is bound by residues histidine 328, aspartate 361, glutamate 415, and histidine 420. Position 361 (aspartate 361) interacts with Zn(2+). Histidine 420 is a Zn(2+) binding site.

The protein belongs to the histidinol dehydrogenase family. Zn(2+) is required as a cofactor.

The enzyme catalyses L-histidinol + 2 NAD(+) + H2O = L-histidine + 2 NADH + 3 H(+). Its pathway is amino-acid biosynthesis; L-histidine biosynthesis; L-histidine from 5-phospho-alpha-D-ribose 1-diphosphate: step 9/9. Catalyzes the sequential NAD-dependent oxidations of L-histidinol to L-histidinaldehyde and then to L-histidine. This is Histidinol dehydrogenase from Ruegeria pomeroyi (strain ATCC 700808 / DSM 15171 / DSS-3) (Silicibacter pomeroyi).